Here is a 924-residue protein sequence, read N- to C-terminus: Ubiquitin carboxyl-terminal hydrolase 15 (924 aa).

The Zn(2+) site is built by Cys130, Cys133, Cys141, Cys144, Cys150, Cys154, His163, and Cys167. The MYND-type zinc finger occupies 130 to 167; that stretch reads CARCFGPAKTRCSRCKSVRYCSGKCQIIHWRVAHKDEC. The span at 226-236 shows a compositional bias: polar residues; that stretch reads DITPQINTQGR. 2 disordered regions span residues 226–301 and 317–366; these read DITP…VDSS and SHKH…TSKK. Basic and acidic residues predominate over residues 247 to 256; the sequence is ANRESCRRDS. A compositionally biased stretch (polar residues) spans 331–362; that stretch reads GCPNTQYPSNGTRTATLPRTGINKSGEQSCTE. The USP domain occupies 438–744; the sequence is RGLVNCGNSC…GAYMLFYMRS (307 aa). The active-site Nucleophile is the Cys447. His703 acts as the Proton acceptor in catalysis. Residues 750 to 793 form a disordered region; the sequence is RGEHNGKAPVHHSQPRNEMKEQRKPVNRFKPRADHKNTESSSSE. Basic and acidic residues predominate over residues 764–773; it reads PRNEMKEQRK.

The protein belongs to the peptidase C19 family. As to quaternary structure, interacts with DA1. As to expression, highly expressed in rosette leaves and inflorescence. Expressed at low levels in cotyledons, stems, cauline leaves and siliques.

It localises to the cytoplasm. Its subcellular location is the nucleus. It catalyses the reaction Thiol-dependent hydrolysis of ester, thioester, amide, peptide and isopeptide bonds formed by the C-terminal Gly of ubiquitin (a 76-residue protein attached to proteins as an intracellular targeting signal).. Recognizes and hydrolyzes the peptide bond at the C-terminal Gly of ubiquitin. Involved in the processing of poly-ubiquitin precursors as well as that of ubiquitinated proteins. Involved in the regulation of organ size. Acts as a positive regulator of cell proliferation. Possesses deubiquitinating enzyme activity in vitro. The enzyme activity of UBP15 is required for its function in regulation of cell proliferation. Functions antagonistically in a common pathway with DA1 to regulate seed size. Acts maternally to regulate seed size by promoting cell proliferation in the integuments of ovules and developing seeds. Functions independently of DA2 and BB. The protein is Ubiquitin carboxyl-terminal hydrolase 15 of Arabidopsis thaliana (Mouse-ear cress).